The chain runs to 180 residues: MTRKKRSRGVGSEGPAVFREKSTTQVDVEARKSQKDKKRKGLKSGNRNAEALDPKHYANGQKKDPRLGSKKPIPLVVEKKPTTKKERRLSAEQELDMLENDAQLMVLLDRIEAGEKLGAGLQKQVDQKLDRIEHLMGRLGLLEVEEPEVTEEAPVRKGAKTDEDLLDQFENMDLDSFGKE.

Disordered stretches follow at residues 1-88 (MTRK…KERR) and 147-180 (PEVTEEAPVRKGAKTDEDLLDQFENMDLDSFGKE). Basic and acidic residues-rich tracts occupy residues 18–33 (FREKSTTQVDVEARKS), 50–67 (EALDPKHYANGQKKDPRL), 77–88 (VEKKPTTKKERR), and 153–163 (APVRKGAKTDE). Residues 164–173 (DLLDQFENMD) are compositionally biased toward acidic residues.

This sequence belongs to the YihI family. As to quaternary structure, interacts with Der.

In terms of biological role, a GTPase-activating protein (GAP) that modifies Der/EngA GTPase function. May play a role in ribosome biogenesis. The chain is Der GTPase-activating protein YihI from Photobacterium profundum (strain SS9).